We begin with the raw amino-acid sequence, 315 residues long: Homoserine kinase (315 aa).

An ATP-binding site is contributed by P97–T107.

This sequence belongs to the GHMP kinase family. Homoserine kinase subfamily.

Its subcellular location is the cytoplasm. The enzyme catalyses L-homoserine + ATP = O-phospho-L-homoserine + ADP + H(+). It functions in the pathway amino-acid biosynthesis; L-threonine biosynthesis; L-threonine from L-aspartate: step 4/5. In terms of biological role, catalyzes the ATP-dependent phosphorylation of L-homoserine to L-homoserine phosphate. This Prochlorococcus marinus (strain SARG / CCMP1375 / SS120) protein is Homoserine kinase.